The chain runs to 370 residues: Mitogen-activated protein kinase mpkC (370 aa).

In terms of domain architecture, Protein kinase spans 19–298; that stretch reads YANVRPVGLG…AAESLEHPYL (280 aa). ATP contacts are provided by residues 25 to 33 and K48; that span reads VGLGAFGLV. The active-site Proton acceptor is the D140. T170 bears the Phosphothreonine mark. Residues 170 to 172 carry the TXY motif; it reads TGY. Y172 bears the Phosphotyrosine mark.

Belongs to the protein kinase superfamily. Ser/Thr protein kinase family. MAP kinase subfamily. HOG1 sub-subfamily. The cofactor is Mg(2+). Post-translationally, dually phosphorylated on Thr-170 and Tyr-172, which activates the enzyme.

It carries out the reaction L-seryl-[protein] + ATP = O-phospho-L-seryl-[protein] + ADP + H(+). The enzyme catalyses L-threonyl-[protein] + ATP = O-phospho-L-threonyl-[protein] + ADP + H(+). Activated by tyrosine and threonine phosphorylation. Its function is as follows. Mitogen-activated protein kinase required for growth on media where sorbitol or mannitol is the sole carbon source. In Aspergillus terreus (strain NIH 2624 / FGSC A1156), this protein is Mitogen-activated protein kinase mpkC (mpkC).